Consider the following 365-residue polypeptide: 3-dehydroquinate synthase (365 aa).

Residues 75–80 (DAENGK), 109–113 (GAATD), 133–134 (TT), Lys-146, and Lys-155 each bind NAD(+). Residues Glu-188, His-253, and His-269 each contribute to the Zn(2+) site.

Belongs to the sugar phosphate cyclases superfamily. Dehydroquinate synthase family. The cofactor is Co(2+). Zn(2+) serves as cofactor. NAD(+) is required as a cofactor.

It is found in the cytoplasm. It catalyses the reaction 7-phospho-2-dehydro-3-deoxy-D-arabino-heptonate = 3-dehydroquinate + phosphate. It functions in the pathway metabolic intermediate biosynthesis; chorismate biosynthesis; chorismate from D-erythrose 4-phosphate and phosphoenolpyruvate: step 2/7. Catalyzes the conversion of 3-deoxy-D-arabino-heptulosonate 7-phosphate (DAHP) to dehydroquinate (DHQ). In Corynebacterium glutamicum (strain R), this protein is 3-dehydroquinate synthase.